Reading from the N-terminus, the 205-residue chain is Ribosome maturation factor RimP (205 aa).

Residues 1-12 (MSNAEAQASSDH) are compositionally biased toward polar residues. Disordered stretches follow at residues 1–24 (MSNAEAQASSDHTAPGKADTAPAH) and 186–205 (FSHLSEDGLEPEHNGPSEEA).

Belongs to the RimP family.

Its subcellular location is the cytoplasm. Required for maturation of 30S ribosomal subunits. In Pseudarthrobacter chlorophenolicus (strain ATCC 700700 / DSM 12829 / CIP 107037 / JCM 12360 / KCTC 9906 / NCIMB 13794 / A6) (Arthrobacter chlorophenolicus), this protein is Ribosome maturation factor RimP.